The chain runs to 267 residues: 3-methyl-2-oxobutanoate hydroxymethyltransferase (267 aa).

Positions 46 and 85 each coordinate Mg(2+). Residues 46–47 (DS), Asp-85, and Lys-115 each bind 3-methyl-2-oxobutanoate. Glu-117 serves as a coordination point for Mg(2+). Glu-184 (proton acceptor) is an active-site residue.

It belongs to the PanB family. As to quaternary structure, homodecamer; pentamer of dimers. It depends on Mg(2+) as a cofactor.

It is found in the cytoplasm. The enzyme catalyses 3-methyl-2-oxobutanoate + (6R)-5,10-methylene-5,6,7,8-tetrahydrofolate + H2O = 2-dehydropantoate + (6S)-5,6,7,8-tetrahydrofolate. Its pathway is cofactor biosynthesis; (R)-pantothenate biosynthesis; (R)-pantoate from 3-methyl-2-oxobutanoate: step 1/2. Its function is as follows. Catalyzes the reversible reaction in which hydroxymethyl group from 5,10-methylenetetrahydrofolate is transferred onto alpha-ketoisovalerate to form ketopantoate. This chain is 3-methyl-2-oxobutanoate hydroxymethyltransferase, found in Citrifermentans bemidjiense (strain ATCC BAA-1014 / DSM 16622 / JCM 12645 / Bem) (Geobacter bemidjiensis).